A 671-amino-acid polypeptide reads, in one-letter code: Major S-layer protein (671 aa).

The signal sequence occupies residues 1–24; that stretch reads MKRFAALSLAALMLLTVFASAASA. Residues Asn36, Asn70, Asn116, and Asn350 are each glycosylated (N-linked (GlcNAc...) asparagine). A disordered region spans residues 594–650; that stretch reads GEEVSGEEETPEETPTGEVTETEGEEETPTEVTETPTEGEPAPEETETTESEGTTPG. Residues 613-622 show a composition bias toward acidic residues; sequence TETEGEEETP. Positions 623-633 are enriched in low complexity; that stretch reads TEVTETPTEGE. A compositionally biased stretch (acidic residues) spans 634–643; that stretch reads PAPEETETTE. The helical transmembrane segment at 647–667 threads the bilayer; the sequence is TTPGFGFMFGLVGLLAVVYLV.

The protein belongs to the Methanosarcinales S-layer protein family. Glycosylated.

The protein localises to the secreted. Its subcellular location is the cell wall. It localises to the S-layer. It is found in the cell membrane. S-layer protein. The S-layer is a paracrystalline mono-layered assembly of proteins which coat the surface of the cell. In Methanosarcina acetivorans (strain ATCC 35395 / DSM 2834 / JCM 12185 / C2A), this protein is Major S-layer protein.